The following is a 506-amino-acid chain: uncharacterized protein (506 aa).

282 to 289 (GIQGTGKS) is a binding site for ATP.

The protein belongs to the AAA ATPase family. Highly divergent.

It localises to the plastid. The protein resides in the chloroplast. This is an uncharacterized protein from Guillardia theta (Cryptophyte).